A 53-amino-acid polypeptide reads, in one-letter code: UPF0391 membrane protein Bcep18194_C7021 (53 aa).

The next 2 membrane-spanning stretches (helical) occupy residues 5 to 25 and 30 to 50; these read AVIF…GIAA and IAKI…LLGV.

This sequence belongs to the UPF0391 family.

It localises to the cell membrane. This chain is UPF0391 membrane protein Bcep18194_C7021, found in Burkholderia lata (strain ATCC 17760 / DSM 23089 / LMG 22485 / NCIMB 9086 / R18194 / 383).